Here is a 430-residue protein sequence, read N- to C-terminus: Trigger factor (430 aa).

The 86-residue stretch at 163–248 (GDTAVFDFAG…LHEVKTKQVP (86 aa)) folds into the PPIase FKBP-type domain.

The protein belongs to the FKBP-type PPIase family. Tig subfamily.

It localises to the cytoplasm. The catalysed reaction is [protein]-peptidylproline (omega=180) = [protein]-peptidylproline (omega=0). Involved in protein export. Acts as a chaperone by maintaining the newly synthesized protein in an open conformation. Functions as a peptidyl-prolyl cis-trans isomerase. The polypeptide is Trigger factor (Exiguobacterium sp. (strain ATCC BAA-1283 / AT1b)).